The sequence spans 292 residues: Protein LRATD1 (292 aa).

A Phosphoserine modification is found at S38. In terms of domain architecture, LRAT spans 133-228 (PATEQPAPAP…CRFGKREFKA (96 aa)).

This sequence belongs to the LRATD family.

It is found in the cytoplasm. In terms of biological role, may play a role in cell morphology and motility. The sequence is that of Protein LRATD1 from Mus musculus (Mouse).